The primary structure comprises 555 residues: Methionine--tRNA ligase (555 aa).

The 'HIGH' region motif lies at 13–23 (PYANGSLHIGH). Zn(2+)-binding residues include Cys-144, Cys-147, Cys-157, and Cys-160. The short motif at 330-334 (KISKS) is the 'KMSKS' region element. Position 333 (Lys-333) interacts with ATP.

It belongs to the class-I aminoacyl-tRNA synthetase family. MetG type 1 subfamily. In terms of assembly, monomer. Zn(2+) is required as a cofactor.

The protein localises to the cytoplasm. The catalysed reaction is tRNA(Met) + L-methionine + ATP = L-methionyl-tRNA(Met) + AMP + diphosphate. Functionally, is required not only for elongation of protein synthesis but also for the initiation of all mRNA translation through initiator tRNA(fMet) aminoacylation. The polypeptide is Methionine--tRNA ligase (Blochmanniella pennsylvanica (strain BPEN)).